Consider the following 177-residue polypeptide: Large ribosomal subunit protein uL6 (177 aa).

It belongs to the universal ribosomal protein uL6 family. In terms of assembly, part of the 50S ribosomal subunit.

This protein binds to the 23S rRNA, and is important in its secondary structure. It is located near the subunit interface in the base of the L7/L12 stalk, and near the tRNA binding site of the peptidyltransferase center. The polypeptide is Large ribosomal subunit protein uL6 (Cereibacter sphaeroides (strain ATCC 17025 / ATH 2.4.3) (Rhodobacter sphaeroides)).